The chain runs to 355 residues: Peptide chain release factor 1 (355 aa).

At Q230 the chain carries N5-methylglutamine.

Belongs to the prokaryotic/mitochondrial release factor family. Post-translationally, methylated by PrmC. Methylation increases the termination efficiency of RF1.

The protein localises to the cytoplasm. Functionally, peptide chain release factor 1 directs the termination of translation in response to the peptide chain termination codons UAG and UAA. In Geobacter sulfurreducens (strain ATCC 51573 / DSM 12127 / PCA), this protein is Peptide chain release factor 1.